Here is a 196-residue protein sequence, read N- to C-terminus: Transmembrane protein 126A (196 aa).

Residues methionine 1–glutamate 34 lie on the Mitochondrial matrix side of the membrane. A helical transmembrane segment spans residues tyrosine 35–phenylalanine 55. Residues arginine 56 to arginine 57 lie on the Mitochondrial intermembrane side of the membrane. Residues isoleucine 58–leucine 78 traverse the membrane as a helical segment. At threonine 79–arginine 106 the chain is on the mitochondrial matrix side. A helical transmembrane segment spans residues glycine 107 to asparagine 127. Over glycine 128–lysine 159 the chain is Mitochondrial intermembrane. Residues methionine 160–serine 176 form a helical membrane-spanning segment. At arginine 177–glutamine 196 the chain is on the mitochondrial matrix side.

The protein belongs to the TMEM126 family. Interacts with OXA1L; promoting cotranslational quality control in mitochondria.

The protein resides in the mitochondrion inner membrane. Functionally, protein required for the cotranslational protein quality control in the inner membrane of the mitochondria. Associates with newly synthesized polypeptides and may act as a chaperone that cooperates with OXA1L for the insertion of newly synthesized mitochondrial proteins into the inner membrane. Required for the assembly of the ND4 module of mitochondrial complex I. In Rattus norvegicus (Rat), this protein is Transmembrane protein 126A (Tmem126a).